The following is a 741-amino-acid chain: Exostosin-1b (741 aa).

Residues 1-7 (MQAKKRY) lie on the Cytoplasmic side of the membrane. The chain crosses the membrane as a helical; Signal-anchor for type II membrane protein span at residues 8-28 (LISLLTGAFLVLLIYLGGGGV). Residues 29–741 (PGPAAPGSRS…RKKYREIERL (713 aa)) are Lumenal-facing. Residues N84 and N325 are each glycosylated (N-linked (GlcNAc...) asparagine). UDP-N-acetyl-alpha-D-glucosamine-binding residues include R435, R544, D560, E561, D562, E648, D649, and R696. Mn(2+) is bound at residue D562. C647 and C699 are oxidised to a cystine. D649 is a catalytic residue.

Belongs to the glycosyltransferase 47 family. The cofactor is Mn(2+).

The protein resides in the endoplasmic reticulum membrane. It carries out the reaction 3-O-{[(1-&gt;4)-beta-D-GlcA-(1-&gt;4)-alpha-D-GlcNAc](n)-(1-&gt;4)-beta-D-GlcA-(1-&gt;3)-beta-D-Gal-(1-&gt;3)-beta-D-Gal-(1-&gt;4)-beta-D-Xyl}-L-seryl-[protein] + UDP-N-acetyl-alpha-D-glucosamine = 3-O-{alpha-D-GlcNAc-[(1-&gt;4)-beta-D-GlcA-(1-&gt;4)-alpha-D-GlcNAc](n)-(1-&gt;4)-beta-D-GlcA-(1-&gt;3)-beta-D-Gal-(1-&gt;3)-beta-D-Gal-(1-&gt;4)-beta-D-Xyl}-L-seryl-[protein] + UDP + H(+). The catalysed reaction is 3-O-{alpha-D-GlcNAc-[(1-&gt;4)-beta-D-GlcA-(1-&gt;4)-alpha-D-GlcNAc](n)-(1-&gt;4)-beta-D-GlcA-(1-&gt;3)-beta-D-Gal-(1-&gt;3)-beta-D-Gal-(1-&gt;4)-beta-D-Xyl}-L-seryl-[protein] + UDP-alpha-D-glucuronate = 3-O-{[(1-&gt;4)-beta-D-GlcA-(1-&gt;4)-alpha-D-GlcNAc](n+1)-(1-&gt;4)-beta-D-GlcA-(1-&gt;3)-beta-D-Gal-(1-&gt;3)-beta-D-Gal-(1-&gt;4)-beta-D-Xyl}-L-seryl-[protein] + UDP + H(+). It participates in protein modification; protein glycosylation. Glycosyltransferase required for the biosynthesis of heparan-sulfate. The polypeptide is Exostosin-1b (ext1b) (Danio rerio (Zebrafish)).